The primary structure comprises 356 residues: Heat-inducible transcription repressor HrcA (356 aa).

Belongs to the HrcA family.

In terms of biological role, negative regulator of class I heat shock genes (grpE-dnaK-dnaJ and groELS operons). Prevents heat-shock induction of these operons. This Brucella abortus (strain S19) protein is Heat-inducible transcription repressor HrcA.